We begin with the raw amino-acid sequence, 324 residues long: Serine racemase (324 aa).

Residues Ser-32, Lys-51, and Thr-52 each contribute to the ATP site. Residue Lys-56 is the Proton acceptor of the active site. Lys-56 carries the post-translational modification N6-(pyridoxal phosphate)lysine. Ca(2+) is bound at residue Thr-78. Ser-81 (proton acceptor) is an active-site residue. Asn-83 is a binding site for pyridoxal 5'-phosphate. ATP is bound by residues Gln-86 and Tyr-118. Asp-175 lines the Mg(2+) pocket. Residues Gly-182, Gly-183, Gly-184, and Gly-185 each coordinate pyridoxal 5'-phosphate. Residues Glu-207, Ala-211, and Asp-213 each contribute to the Ca(2+) site. Mg(2+) is bound by residues Glu-207, Ala-211, and Asp-213. Mn(2+)-binding residues include Glu-207, Ala-211, and Asp-213. An ATP-binding site is contributed by Lys-277. Residue Ser-310 coordinates pyridoxal 5'-phosphate. Asn-313 lines the ATP pocket.

The protein belongs to the serine/threonine dehydratase family. As to quaternary structure, homodimer. Requires Mg(2+) as cofactor. Mn(2+) is required as a cofactor. Ca(2+) serves as cofactor. It depends on pyridoxal 5'-phosphate as a cofactor.

The enzyme catalyses L-serine = D-serine. It catalyses the reaction L-serine = pyruvate + NH4(+). The catalysed reaction is D-serine = pyruvate + NH4(+). In terms of biological role, catalyzes the synthesis of D-serine from L-serine. Has dehydratase activity towards both L-serine and D-serine. This is Serine racemase (srr) from Dictyostelium discoideum (Social amoeba).